The following is a 166-amino-acid chain: Large ribosomal subunit protein uL10 (166 aa).

It belongs to the universal ribosomal protein uL10 family. In terms of assembly, part of the ribosomal stalk of the 50S ribosomal subunit. The N-terminus interacts with L11 and the large rRNA to form the base of the stalk. The C-terminus forms an elongated spine to which L12 dimers bind in a sequential fashion forming a multimeric L10(L12)X complex.

Forms part of the ribosomal stalk, playing a central role in the interaction of the ribosome with GTP-bound translation factors. The chain is Large ribosomal subunit protein uL10 from Streptococcus agalactiae serotype V (strain ATCC BAA-611 / 2603 V/R).